Here is a 138-residue protein sequence, read N- to C-terminus: DNA-directed RNA polymerase II subunit 4 (138 aa).

S2 carries the post-translational modification N-acetylserine.

Belongs to the eukaryotic RPB4 RNA polymerase subunit family. In terms of assembly, component of the RNA polymerase II complex consisting of at least 12 subunits. Interacts with NRPB7.

It is found in the nucleus. DNA-dependent RNA polymerase catalyzes the transcription of DNA into RNA using the four ribonucleoside triphosphates as substrates. Second largest component of RNA polymerase II which synthesizes mRNA precursors and many functional non-coding RNAs. Proposed to contribute to the polymerase catalytic activity and forms the polymerase active center together with the largest subunit. Pol II is the central component of the basal RNA polymerase II transcription machinery. It is composed of mobile elements that move relative to each other. The protein is DNA-directed RNA polymerase II subunit 4 (NRPB4) of Arabidopsis thaliana (Mouse-ear cress).